A 549-amino-acid polypeptide reads, in one-letter code: MAELTIPADDIQSAIEEYVSSFTADTSREEVGTVVDAGDGIAHVEGLPSVMTQELLEFPGGILGVALNLDEHSVGAVILGDFENIEEGQQVKRTGEVLSVPVGDGFLGRVVNPLGQPIDGRGDVDSDTRRALELQAPSVVHRQGVKEPLQTGIKAIDAMTPIGRGQRQLIIGDRKTGKTAVCVDTILNQRQNWESGDPKKQVRCVYVAIGQKGTTIAAVRRTLEEGGAMDYTTIVAAAASESAGFKWLAPYTGSAIAQHWMYEGKHVLIIFDDLTKQAEAYRAISLLLRRPPGREAYPGDVFYLHSRLLERCAKLSDDLGGGSLTGLPIIETKANDISAYIPTNVISITDGQCFLETDLFNQGVRPAINVGVSVSRVGGAAQIKAMKEVAGSLRLDLSQYRELEAFAAFASDLDAASKAQLERGARLVELLKQPQSQPMPVEEQVVSIFLGTGGHLDSVPVEDVRRFETELLDHMRASEEEILTEIRDSQKLTEEAADKLTEVIKNFKKGFAATGGGSVVPDEHVEALDEDKLAKEAVKVKKPAPKKKK.

172–179 (GDRKTGKT) serves as a coordination point for ATP.

This sequence belongs to the ATPase alpha/beta chains family. In terms of assembly, F-type ATPases have 2 components, CF(1) - the catalytic core - and CF(0) - the membrane proton channel. CF(1) has five subunits: alpha(3), beta(3), gamma(1), delta(1), epsilon(1). CF(0) has three main subunits: a(1), b(2) and c(9-12). The alpha and beta chains form an alternating ring which encloses part of the gamma chain. CF(1) is attached to CF(0) by a central stalk formed by the gamma and epsilon chains, while a peripheral stalk is formed by the delta and b chains.

The protein localises to the cell membrane. The enzyme catalyses ATP + H2O + 4 H(+)(in) = ADP + phosphate + 5 H(+)(out). Functionally, produces ATP from ADP in the presence of a proton gradient across the membrane. The alpha chain is a regulatory subunit. The chain is ATP synthase subunit alpha from Mycobacterium tuberculosis (strain CDC 1551 / Oshkosh).